The sequence spans 911 residues: Anoctamin-6 (911 aa).

Topologically, residues 1-301 are cytoplasmic; the sequence is MQMMTRKVLL…YGEKIGIYFA (301 aa). Residues 302 to 322 traverse the membrane as a helical segment; that stretch reads WLGYYTQMLLLAAVVGVACFL. Topologically, residues 323-376 are extracellular; that stretch reads YGYLDQDNCTWSKEVCDPDIGGQILMCPQCDRLCPFWRLNITCESSKKLCIFDS. N-linked (GlcNAc...) asparagine glycosylation is present at Asn330. Cystine bridges form between Cys331–Cys372, Cys338–Cys365, Cys349–Cys807, Cys352–Cys356, and Cys596–Cys601. Asn362 is a glycosylation site (N-linked (GlcNAc...) asparagine). The chain crosses the membrane as a helical span at residues 377 to 397; it reads FGTLIFAVFMGVWVTLFLEFW. At 398 to 456 the chain is on the cytoplasmic side; that stretch reads KRRQAELEYEWDTVELQQEEQARPEYEAQCNHVVINEITQEEERIPFTTCGKCIRVTLC. A helical transmembrane segment spans residues 457–477; sequence ASAVFFWILLIIASVIGIIVY. At 478 to 510 the chain is on the extracellular side; sequence RLSVFIVFSTTLPKNPNGTDPIQKYLTPQMATS. Asn494 is a glycosylation site (N-linked (GlcNAc...) asparagine). A helical transmembrane segment spans residues 511 to 531; that stretch reads ITASIISFIIIMILNTIYEKV. Topologically, residues 532 to 552 are cytoplasmic; that stretch reads AIMITNFELPRTQTDYENSLT. A helical transmembrane segment spans residues 553–573; that stretch reads MKMFLFQFVNYYSSCFYIAFF. The Extracellular portion of the chain corresponds to 574–602; sequence KGKFVGYPGDPVYLLGKYRSEECDPGGCL. A helical transmembrane segment spans residues 603-622; it reads LELTTQLTIIMGGKAIWNNI. Residues 623–664 lie on the Cytoplasmic side of the membrane; sequence QEVLLPWVMNLIGRYKRVSGSEKITPRWEQDYHLQPMGKLGL. Ca(2+)-binding residues include Glu624, Glu667, and Glu670. 2 helical membrane-spanning segments follow: residues 665–685 and 686–706; these read FYEY…VASF and PLAP…DAWK. Over 707–723 the chain is Cytoplasmic; that stretch reads LTTQFRRMVPEKAQDIG. A helical membrane pass occupies residues 724-744; the sequence is AWQPIMQGIAILAVVTNAMII. Residues 745-837 lie on the Extracellular side of the membrane; sequence AFTSDMIPRL…YWHVIAAKLA (93 aa). Residues Asn778, Asn785, and Asn803 are each glycosylated (N-linked (GlcNAc...) asparagine). A helical transmembrane segment spans residues 838-858; that stretch reads FIIVMEHIIYSVKFFISYAIP. At 859 to 911 the chain is on the cytoplasmic side; it reads DVSKITKSKIKREKYLTQKLLHESHLKDLTKNMGIIAERIGGTVDNSVRPKLE.

Belongs to the anoctamin family. Homodimer. Predominant expression seen in epithelial tissues. Also found in skeletal system where it is primarily expressed in osteoblasts.

It is found in the cell membrane. The catalysed reaction is a 1,2-diacyl-sn-glycero-3-phospho-L-serine(in) = a 1,2-diacyl-sn-glycero-3-phospho-L-serine(out). It catalyses the reaction a beta-D-galactosyl-(1&lt;-&gt;1')-N-acylsphing-4-enine(out) = a beta-D-galactosyl-(1&lt;-&gt;1')-N-acylsphing-4-enine(in). It carries out the reaction a 1,2-diacyl-sn-glycero-3-phosphocholine(in) = a 1,2-diacyl-sn-glycero-3-phosphocholine(out). With respect to regulation, exhibits synergistic gating by Ca(2+) and voltage. Inhibited by some non-specific cation channel blockers such as: ruthenium red, 2-aminoethyl diphenylborinate (2APB), gadolinium and cadmium ions. In terms of biological role, small-conductance calcium-activated nonselective cation (SCAN) channel which acts as a regulator of phospholipid scrambling in platelets, osteoblasts and fetal thymocytes. Phospholipid scrambling results in surface exposure of phosphatidylserine which in platelets is essential to trigger the clotting system whereas in osteoblasts is essential for the deposition of hydroxyapatite during bone mineralization. Has calcium-dependent phospholipid scramblase activity; scrambles phosphatidylserine, phosphatidylcholine and galactosylceramide. Can generate outwardly rectifying chloride channel currents in airway epithelial cells and Jurkat T lymphocytes. The polypeptide is Anoctamin-6 (Ano6) (Mus musculus (Mouse)).